We begin with the raw amino-acid sequence, 147 residues long: Small ribosomal subunit protein uS12 (147 aa).

It belongs to the universal ribosomal protein uS12 family. In terms of assembly, part of the 30S ribosomal subunit.

Its function is as follows. With S4 and S5 plays an important role in translational accuracy. Located at the interface of the 30S and 50S subunits. This chain is Small ribosomal subunit protein uS12, found in Methanococcus maripaludis (strain C7 / ATCC BAA-1331).